The primary structure comprises 476 residues: MTRPRTLYEKIWDAHVVERRGDGTCLIFIDRHLVHEVTSPQAFAGLRASGRTVRRPDLTLAVPDHNVPTTPRKDAAGNRLPIADPESAAQLAALEKNAPEFGIRYIDAIAPEQGIVHVVGPEQGFSLPGATIVCGDSHTACHGGIGALAFGIGTSEVEHVLATQTLLLQPAKTMEVRVEGDVGPGVSAKDIILHITGTIGAAGGTGHVIEYTGSAIRALSIEGRLTISNMAIEGGARAGLIAPDETTFAYLKGRPYAPKGADWDAAVAYWKSLTTDPGATYDKVVVIDAADIAPSVTWGTSPEDVVPITGTVPDPASFSDPSKRAAAAKSLAYMGLEPGTRMQDVPVENIFIGSCTNSRIEDLRAAAAVLKGRRKAPGVKWAIVVPGSGLVKAQAEAEGLDRIFIDAGLEWREPGCSACLAMNPDKVPAGERCASTSNRNFVGRQGPGARTHLVSPAMAAAAAVTGKLTDVRELMA.

Positions 355, 416, and 419 each coordinate [4Fe-4S] cluster.

This sequence belongs to the aconitase/IPM isomerase family. LeuC type 1 subfamily. In terms of assembly, heterodimer of LeuC and LeuD. Requires [4Fe-4S] cluster as cofactor.

It carries out the reaction (2R,3S)-3-isopropylmalate = (2S)-2-isopropylmalate. It functions in the pathway amino-acid biosynthesis; L-leucine biosynthesis; L-leucine from 3-methyl-2-oxobutanoate: step 2/4. In terms of biological role, catalyzes the isomerization between 2-isopropylmalate and 3-isopropylmalate, via the formation of 2-isopropylmaleate. This Sphingopyxis alaskensis (strain DSM 13593 / LMG 18877 / RB2256) (Sphingomonas alaskensis) protein is 3-isopropylmalate dehydratase large subunit.